The chain runs to 390 residues: Putative F-box protein At3g52320 (390 aa).

In terms of domain architecture, F-box spans valine 21–serine 71.

This chain is Putative F-box protein At3g52320, found in Arabidopsis thaliana (Mouse-ear cress).